Reading from the N-terminus, the 304-residue chain is DDRGK domain-containing protein 1 (304 aa).

The Lumenal portion of the chain corresponds to 1–2; the sequence is MD. A helical transmembrane segment spans residues 3–23; it reads LIILVGIAIALLVVIISLYLL. At 24–304 the chain is on the cytoplasmic side; it reads QKKNSTTEAK…LTPVSAEGSS (281 aa). Positions 31–174 are disordered; sequence EAKPAAAAPQ…AERLAKEERE (144 aa). A compositionally biased stretch (low complexity) spans 53–82; the sequence is RRAQIARNQRNRLRQNAPVAAAAPQAEAPA. A compositionally biased stretch (basic and acidic residues) spans 105-174; the sequence is LDEKMGAKKR…AERLAKEERE (70 aa).

This sequence belongs to the DDRGK1 family. As to quaternary structure, interacts with Atg9; the interaction is transient.

The protein localises to the endoplasmic reticulum membrane. Its function is as follows. Substrate adapter for ufmylation, the covalent attachment of the ubiquitin-like modifier UFM1 to substrate proteins. Required for ufmylation of Atg9; protects the nervous system during aging, possibly by stabilizing Atg9 and supporting its function. In Drosophila ananassae (Fruit fly), this protein is DDRGK domain-containing protein 1.